Consider the following 285-residue polypeptide: Non-homologous end joining protein Ku (285 aa).

Residues 9 to 176 (ISFGLVNVPV…PAEIRHLEAS (168 aa)) enclose the Ku domain. A disordered region spans residues 250 to 285 (AMTDQKKQQNTAESETEEKPTKSTLTPRGRRKVKGA).

Belongs to the prokaryotic Ku family. As to quaternary structure, homodimer. Interacts with LigD.

With LigD forms a non-homologous end joining (NHEJ) DNA repair enzyme, which repairs dsDNA breaks with reduced fidelity. Binds linear dsDNA with 5'- and 3'- overhangs but not closed circular dsDNA nor ssDNA. Recruits and stimulates the ligase activity of LigD. This Desulfitobacterium hafniense (strain DSM 10664 / DCB-2) protein is Non-homologous end joining protein Ku.